Here is a 259-residue protein sequence, read N- to C-terminus: Keratin-associated protein 10-8 (259 aa).

The 19 X 5 AA repeats of C-C-X(3) stretch occupies residues 26 to 243; that stretch reads HVSRVSSPST…SCQPSCCHPA (218 aa). Repeat copies occupy residues 50–54, 60–64, 65–69, 98–102, 108–112, 118–122, 123–127, 133–137, 145–149, 155–159, 165–169, 170–174, 175–179, 187–191, 197–201, 202–206, 221–225, 228–232, and 239–243.

This sequence belongs to the KRTAP type 10 family. Interacts with hair keratins. In terms of tissue distribution, restricted to a narrow region of the hair fiber cuticle, lying approximately 20 cell layers above the apex of the dermal papilla of the hair root; not detected in any other tissues.

Functionally, in the hair cortex, hair keratin intermediate filaments are embedded in an interfilamentous matrix, consisting of hair keratin-associated proteins (KRTAP), which are essential for the formation of a rigid and resistant hair shaft through their extensive disulfide bond cross-linking with abundant cysteine residues of hair keratins. The matrix proteins include the high-sulfur and high-glycine-tyrosine keratins. The polypeptide is Keratin-associated protein 10-8 (KRTAP10-8) (Homo sapiens (Human)).